The following is a 239-amino-acid chain: Probable transcriptional regulatory protein MG332 (239 aa).

It belongs to the TACO1 family.

Its subcellular location is the cytoplasm. The polypeptide is Probable transcriptional regulatory protein MG332 (Mycoplasma genitalium (strain ATCC 33530 / DSM 19775 / NCTC 10195 / G37) (Mycoplasmoides genitalium)).